The chain runs to 187 residues: Large ribosomal subunit protein uL5 (187 aa).

The protein belongs to the universal ribosomal protein uL5 family. As to quaternary structure, part of the 50S ribosomal subunit; part of the 5S rRNA/L5/L18/L25 subcomplex. Contacts the 5S rRNA and the P site tRNA. Forms a bridge to the 30S subunit in the 70S ribosome.

In terms of biological role, this is one of the proteins that bind and probably mediate the attachment of the 5S RNA into the large ribosomal subunit, where it forms part of the central protuberance. In the 70S ribosome it contacts protein S13 of the 30S subunit (bridge B1b), connecting the 2 subunits; this bridge is implicated in subunit movement. Contacts the P site tRNA; the 5S rRNA and some of its associated proteins might help stabilize positioning of ribosome-bound tRNAs. The polypeptide is Large ribosomal subunit protein uL5 (Mycobacterium bovis (strain ATCC BAA-935 / AF2122/97)).